The chain runs to 334 residues: Probable tRNA pseudouridine synthase B (334 aa).

D82 (nucleophile) is an active-site residue. The 76-residue stretch at 250-325 (LPKIWIKDSA…IAVDVEKVFM (76 aa)) folds into the PUA domain.

The protein belongs to the pseudouridine synthase TruB family. Type 2 subfamily.

The enzyme catalyses uridine(55) in tRNA = pseudouridine(55) in tRNA. Functionally, could be responsible for synthesis of pseudouridine from uracil-55 in the psi GC loop of transfer RNAs. The protein is Probable tRNA pseudouridine synthase B of Pyrococcus horikoshii (strain ATCC 700860 / DSM 12428 / JCM 9974 / NBRC 100139 / OT-3).